We begin with the raw amino-acid sequence, 337 residues long: UbiA prenyltransferase domain-containing protein 1 (337 aa).

Ala2 carries the post-translational modification N-acetylalanine. 8 helical membrane passes run 82–102 (LLVG…LVNT), 133–153 (FGVF…CLSP), 159–179 (LALI…GIGF), 187–207 (LVIL…VQVG), 208–228 (SLAV…EAVL), 244–266 (IVTL…LLFL), 276–296 (THCS…FSLE), and 314–334 (LNLL…AGSL).

Belongs to the UbiA prenyltransferase family. Interacts with HMGCR and SOAT1.

It localises to the endoplasmic reticulum membrane. The protein resides in the golgi apparatus membrane. It is found in the mitochondrion membrane. It carries out the reaction menadiol + (2E,6E,10E)-geranylgeranyl diphosphate = menaquinol-4 + diphosphate. The enzyme catalyses all-trans-decaprenyl diphosphate + 4-hydroxybenzoate = 4-hydroxy-3-(all-trans-decaprenyl)benzoate + diphosphate. Its pathway is quinol/quinone metabolism; menaquinone biosynthesis. It participates in cofactor biosynthesis; ubiquinone biosynthesis. Functionally, prenyltransferase that mediates the formation of menaquinone-4 (MK-4) and coenzyme Q10. MK-4 is a vitamin K2 isoform required for endothelial cell development. Mediates the conversion of phylloquinone (PK) into MK-4, probably by cleaving the side chain of phylloquinone (PK) to release 2-methyl-1,4-naphthoquinone (menadione; K3) and then prenylating it with geranylgeranyl pyrophosphate (GGPP) to form MK-4. Also plays a role in cardiovascular development independently of MK-4 biosynthesis, by acting as a coenzyme Q10 biosynthetic enzyme: coenzyme Q10, also named ubiquinone, plays an important antioxidant role in the cardiovascular system. Mediates biosynthesis of coenzyme Q10 in the Golgi membrane, leading to protect cardiovascular tissues from NOS3/eNOS-dependent oxidative stress. The protein is UbiA prenyltransferase domain-containing protein 1 (UBIAD1) of Ailuropoda melanoleuca (Giant panda).